An 81-amino-acid chain; its full sequence is Protein Vpu (81 aa).

Residues 1-7 lie on the Extracellular side of the membrane; sequence MQPLGII. Residues 8-28 traverse the membrane as a helical segment; sequence AIAALVVAIILAIVVWTIVFI. The Cytoplasmic portion of the chain corresponds to 29–81; the sequence is EYRRIKKQRRIDCLLDRITERAEDSGNESEGDREKLSKLVEMGHHAPWDIDDL. 2 positions are modified to phosphoserine; by host CK2: Ser53 and Ser57.

This sequence belongs to the HIV-1 VPU protein family. As to quaternary structure, homopentamer. Interacts with host CD4 and BRTC; these interactions induce proteasomal degradation of CD4. Interacts with host BST2; this interaction leads to the degradation of host BST2. Interacts with host FBXW11. Interacts with host AP1M1; this interaction plays a role in the mistrafficking and subsequent degradation of host BST2. Interacts with host RANBP2; this interaction allows Vpu to down-regulate host BLM sumoylation. Post-translationally, phosphorylated by host CK2. This phosphorylation is necessary for interaction with human BTRC and degradation of CD4.

It is found in the host membrane. Its activity is regulated as follows. Ion channel activity is inhibited by hexamethylene amiloride in vitro. In terms of biological role, enhances virion budding by targeting host CD4 and Tetherin/BST2 to proteasome degradation. Degradation of CD4 prevents any unwanted premature interactions between viral Env and its host receptor CD4 in the endoplasmic reticulum. Degradation of antiretroviral protein Tetherin/BST2 is important for virion budding, as BST2 tethers new viral particles to the host cell membrane. Mechanistically, Vpu bridges either CD4 or BST2 to BTRC, a substrate recognition subunit of the Skp1/Cullin/F-box protein E3 ubiquitin ligase, induces their ubiquitination and subsequent proteasomal degradation. The alteration of the E3 ligase specificity by Vpu seems to promote the degradation of host IKBKB, leading to NF-kappa-B down-regulation and subsequent apoptosis. Acts as a viroporin that forms an oligomeric ion channel in membranes. Modulates the host DNA repair mechanisms to promote degradation of nuclear viral cDNA in cells that are already productively infected in order to suppress immune sensing and proviral hyper-integration (superinfection). Manipulates PML-NBs and modulates SUMOylation of host BLM protein thereby enhancing its DNA-end processing activity toward viral unintegrated linear DNA. Also inhibits RAD52-mediated homologous repair of viral cDNA, preventing the generation of dead-end circular forms of single copies of the long terminal repeat and permitting sustained nucleolytic attack. This chain is Protein Vpu, found in Human immunodeficiency virus type 1 group M subtype D (isolate ELI) (HIV-1).